Here is a 100-residue protein sequence, read N- to C-terminus: Urease subunit gamma 2 (100 aa).

The protein belongs to the urease gamma subunit family. As to quaternary structure, heterotrimer of UreA (gamma), UreB (beta) and UreC (alpha) subunits. Three heterotrimers associate to form the active enzyme.

The protein resides in the cytoplasm. It catalyses the reaction urea + 2 H2O + H(+) = hydrogencarbonate + 2 NH4(+). Its pathway is nitrogen metabolism; urea degradation; CO(2) and NH(3) from urea (urease route): step 1/1. Its function is as follows. Disrupting the ure2 operon has no effect on urease activity or pathogen survival in BALB/c mice when administered orally. The sequence is that of Urease subunit gamma 2 from Brucella abortus (strain 2308).